The primary structure comprises 161 residues: Anthrone oxygenase tpcL (161 aa).

A glycan (N-linked (GlcNAc...) asparagine) is linked at Asn-4. Helical transmembrane passes span 15 to 35 (VITG…DIPV), 56 to 74 (IGHK…LYGY), 87 to 107 (LPHI…WLVM), and 136 to 155 (WAQL…VLGL).

It belongs to the anthrone oxygenase family. In terms of tissue distribution, specifically expressed in conidia.

It is found in the membrane. It catalyses the reaction emodin anthrone + O2 = emodin + H2O + H(+). Its pathway is secondary metabolite biosynthesis. Its function is as follows. Anthrone oxygenase; part of the gene cluster that mediates the biosynthesis of trypacidin, a mycotoxin with antiprotozoal activity and that plays a role in the infection process. The pathway begins with the synthesis of atrochrysone thioester by the polyketide synthase (PKS) tpcC. The atrochrysone carboxyl ACP thioesterase tpcB then breaks the thioester bond and releases the atrochrysone carboxylic acid from tpcC. The decarboxylase tpcK converts atrochrysone carboxylic acid to atrochrysone which is further reduced into emodin anthrone. The next step is performed by the emodin anthrone oxygenase tpcL that catalyzes the oxidation of emodinanthrone to emodin. Emodin O-methyltransferase encoded by tpcA catalyzes methylation of the 8-hydroxy group of emodin to form questin. Ring cleavage of questin by questin oxidase tpcI leads to desmethylsulochrin via several intermediates including questin epoxide. Another methylation step catalyzed by tpcM leads to the formation of sulochrin which is further converted to monomethylsulfochrin by tpcH. Finally, the tpcJ catalyzes the conversion of monomethylsulfochrin to trypacidin. Trypacidin is toxic for human pulmonary and bronchial epithelial cells by initiating the intracellular formation of nitric oxide (NO) and hydrogen peroxide (H(2)O(2)), thus triggering host necrotic cell death. The trypacidin pathway is also able to produce endocrocin via a distinct route from the endocrocin Enc pathway. This chain is Anthrone oxygenase tpcL, found in Aspergillus fumigatus (strain ATCC MYA-4609 / CBS 101355 / FGSC A1100 / Af293) (Neosartorya fumigata).